Reading from the N-terminus, the 595-residue chain is Putative terpenoid synthase 16 (595 aa).

Mg(2+) contacts are provided by aspartate 349, aspartate 353, asparagine 494, and aspartate 502. The DDXXD motif signature appears at 349–353 (DDTCD).

This sequence belongs to the terpene synthase family. Tpsa subfamily. Mg(2+) serves as cofactor. Mn(2+) is required as a cofactor.

It is found in the cytoplasm. Its pathway is secondary metabolite biosynthesis; terpenoid biosynthesis. The sequence is that of Putative terpenoid synthase 16 (TPS16) from Arabidopsis thaliana (Mouse-ear cress).